The following is a 235-amino-acid chain: 1-Cys peroxiredoxin (235 aa).

In terms of domain architecture, Thioredoxin spans 5–179; the sequence is ILLGDKFPDF…ILRVVDSLQL (175 aa). Cys-49 is a catalytic residue. The active-site Cysteine sulfenic acid (-SOH) intermediate is the Cys-49.

Belongs to the peroxiredoxin family. Prx6 subfamily.

The protein localises to the cytoplasm. It carries out the reaction a hydroperoxide + [protein]-dithiol = [protein]-disulfide + an alcohol + H2O. Functionally, thiol-specific peroxidase that catalyzes the reduction of hydrogen peroxide and organic hydroperoxides to water and alcohols, respectively. Plays a role in cell protection against oxidative stress by detoxifying peroxides. This chain is 1-Cys peroxiredoxin, found in Dirofilaria immitis (Canine heartworm).